Consider the following 173-residue polypeptide: Protein FAM180A (173 aa).

The N-terminal stretch at Met-1–Ala-17 is a signal peptide.

Belongs to the FAM180 family.

The protein resides in the secreted. This is Protein FAM180A (Fam180a) from Mus musculus (Mouse).